The sequence spans 465 residues: Glutamate--tRNA ligase (465 aa).

Positions 5-15 match the 'HIGH' region motif; the sequence is PSPTGMFHVGG. C96, C98, C118, and D120 together coordinate Zn(2+). A 'KMSKS' region motif is present at residues 228–232; the sequence is KLSKR. Residue K231 coordinates ATP.

This sequence belongs to the class-I aminoacyl-tRNA synthetase family. Glutamate--tRNA ligase type 1 subfamily. In terms of assembly, monomer. The cofactor is Zn(2+).

The protein localises to the cytoplasm. The enzyme catalyses tRNA(Glu) + L-glutamate + ATP = L-glutamyl-tRNA(Glu) + AMP + diphosphate. Functionally, catalyzes the attachment of glutamate to tRNA(Glu) in a two-step reaction: glutamate is first activated by ATP to form Glu-AMP and then transferred to the acceptor end of tRNA(Glu). This is Glutamate--tRNA ligase from Salinispora tropica (strain ATCC BAA-916 / DSM 44818 / JCM 13857 / NBRC 105044 / CNB-440).